The following is a 285-amino-acid chain: 3-methyl-2-oxobutanoate hydroxymethyltransferase (285 aa).

The interval 1–22 is disordered; it reads MSEHNVYGAAQPAQPGQPAQPR. Residues 8-21 are compositionally biased toward low complexity; the sequence is GAAQPAQPGQPAQP. D66 and D105 together coordinate Mg(2+). 3-methyl-2-oxobutanoate is bound by residues 66 to 67, D105, and K135; that span reads DS. E137 serves as a coordination point for Mg(2+). E203 acts as the Proton acceptor in catalysis.

This sequence belongs to the PanB family. Homodecamer; pentamer of dimers. Requires Mg(2+) as cofactor.

Its subcellular location is the cytoplasm. It catalyses the reaction 3-methyl-2-oxobutanoate + (6R)-5,10-methylene-5,6,7,8-tetrahydrofolate + H2O = 2-dehydropantoate + (6S)-5,6,7,8-tetrahydrofolate. The protein operates within cofactor biosynthesis; (R)-pantothenate biosynthesis; (R)-pantoate from 3-methyl-2-oxobutanoate: step 1/2. In terms of biological role, catalyzes the reversible reaction in which hydroxymethyl group from 5,10-methylenetetrahydrofolate is transferred onto alpha-ketoisovalerate to form ketopantoate. The sequence is that of 3-methyl-2-oxobutanoate hydroxymethyltransferase from Mycolicibacterium paratuberculosis (strain ATCC BAA-968 / K-10) (Mycobacterium paratuberculosis).